Consider the following 353-residue polypeptide: Peroxidase C1A (353 aa).

Residues 1–30 form the signal peptide; it reads MHFSSSSTLFTCITLIPLVCLILHASLSDA. Residue glutamine 31 is modified to Pyrrolidone carboxylic acid. 4 cysteine pairs are disulfide-bonded: cysteine 41–cysteine 121, cysteine 74–cysteine 79, cysteine 127–cysteine 331, and cysteine 207–cysteine 239. N-linked (GlcNAc...) asparagine glycosylation occurs at asparagine 43. Histidine 72 (proton acceptor) is an active-site residue. Positions 73, 76, 78, 80, and 82 each coordinate Ca(2+). An N-linked (GlcNAc...) asparagine glycan is attached at asparagine 87. Residue glutamate 94 participates in Ca(2+) binding. Residue proline 169 coordinates substrate. N-linked (GlcNAc...) asparagine glycosylation occurs at asparagine 188. Residue histidine 200 participates in heme b binding. Position 201 (threonine 201) interacts with Ca(2+). 3 N-linked (GlcNAc...) asparagine glycosylation sites follow: asparagine 216, asparagine 228, and asparagine 244. Ca(2+) contacts are provided by aspartate 252, threonine 255, and aspartate 260. Asparagine 285 and asparagine 298 each carry an N-linked (GlcNAc...) asparagine glycan. The propeptide occupies 339 to 353; that stretch reads LLHDMVEVVDFVSSM.

The protein belongs to the peroxidase family. Classical plant (class III) peroxidase subfamily. In terms of assembly, monomer. Ca(2+) serves as cofactor. Heme b is required as a cofactor.

It is found in the secreted. The protein resides in the vacuole. The enzyme catalyses 2 a phenolic donor + H2O2 = 2 a phenolic radical donor + 2 H2O. Functionally, removal of H(2)O(2), oxidation of toxic reductants, biosynthesis and degradation of lignin, suberization, auxin catabolism, response to environmental stresses such as wounding, pathogen attack and oxidative stress. These functions might be dependent on each isozyme/isoform in each plant tissue. The polypeptide is Peroxidase C1A (PRXC1A) (Armoracia rusticana (Horseradish)).